Here is a 3411-residue protein sequence, read N- to C-terminus: Genome polyprotein (3411 aa).

The Cytoplasmic segment spans residues 1-104 (MSGRKAQGKT…LSSRKRRSHD (104 aa)). Positions 102–121 (SHDALAVQFLILGMLLMAGG) are cleaved as a propeptide — ER anchor for the capsid protein C, removed in mature form by serine protease NS3. Residues 105–125 (ALAVQFLILGMLLMAGGVTLV) traverse the membrane as a helical segment. The Extracellular portion of the chain corresponds to 126–244 (RKNRWLLLNV…GERQLQKIER (119 aa)). N-linked (GlcNAc...) asparagine; by host glycans are attached at residues asparagine 134 and asparagine 150. The chain crosses the membrane as a helical span at residues 245-265 (WLVRNPFFAVTALTIAYLVGS). The Cytoplasmic segment spans residues 266-270 (NMTQR). The chain crosses the membrane as a helical span at residues 271–285 (VVIALLVLAVGPAYS). At 286–730 (AHCIGITDRD…TVFGSAFQGL (445 aa)) the chain is on the extracellular side. 8 disulfide bridges follow: cysteine 288–cysteine 315, cysteine 345–cysteine 401, cysteine 345–cysteine 406, cysteine 359–cysteine 390, cysteine 377–cysteine 401, cysteine 377–cysteine 406, cysteine 467–cysteine 568, and cysteine 585–cysteine 615. Residues 383-396 (DRGWGNGCGLFGKG) form a fusion peptide region. A helical transmembrane segment spans residues 731–751 (FGGLSWITKVIMGAVLIWVGI). Residues 752-757 (NTRNMT) lie on the Extracellular side of the membrane. Residues 758–778 (MSMSMILVGVIMMFLSLGVGA) traverse the membrane as a helical segment. The Extracellular segment spans residues 779–1132 (DQGCAINFGK…LVRSWVTAGE (354 aa)). Cystine bridges form between cysteine 782–cysteine 793, cysteine 833–cysteine 921, cysteine 957–cysteine 1002, cysteine 1058–cysteine 1107, cysteine 1069–cysteine 1091, and cysteine 1090–cysteine 1094. N-linked (GlcNAc...) asparagine; by host glycans are attached at residues asparagine 908 and asparagine 986. The chain crosses the membrane as a helical span at residues 1133 to 1153 (IHAVPFGLVSMMIAMEVVLRK). Residues 1154-1201 (RQGPKQMLVGGVVLLGAMLVGQVTLLDLLKLTVAVGLHFHEMNNGGDA) lie on the Cytoplasmic side of the membrane. Residues 1202-1222 (MYMALIAAFSIRPGLLIGFGL) form a helical membrane-spanning segment. The Lumenal segment spans residues 1223–1287 (RTLWSPRERL…ILPLMALLTP (65 aa)). A helical membrane pass occupies residues 1288–1308 (VTMAEVRLAAMLFCTVVIIGV). Over 1309 to 1355 (LHQNSKDTSMQKTIPLVALTLTSYLGLTQPFLGLCAFLATRLFGRRS) the chain is Cytoplasmic. A helical transmembrane segment spans residues 1356 to 1376 (IPVNEALAAAGLVGVLAGLAF). The Lumenal portion of the chain corresponds to 1377-1378 (QE). A helical membrane pass occupies residues 1379 to 1399 (MENFLGPIAVGGILMMLVSVA). Over 1400 to 1456 (GRVDGLELRKLGEVSWEEEAEISGSSARYDVALSEQGEFKLLSEEKVPWDQVVMTSL) the chain is Cytoplasmic. Positions 1407–1446 (LRKLGEVSWEEEAEISGSSARYDVALSEQGEFKLLSEEKV) are interacts with and activates NS3 protease. The segment at residues 1457–1477 (ALVGAAIHPFALLLVLAGWLF) is an intramembrane region (helical). Topologically, residues 1478–2157 (HVKGARRSGD…RNALSMMPEA (680 aa)) are cytoplasmic. The Peptidase S7 domain occupies 1485–1665 (SGDVLWDIPT…EVKEEGKEEL (181 aa)). Catalysis depends on charge relay system; for serine protease NS3 activity residues histidine 1537, aspartate 1561, and serine 1622. The 157-residue stretch at 1669 to 1825 (PTMLKKGMTT…HSNGEIEDVQ (157 aa)) folds into the Helicase ATP-binding domain. An important for RNA-binding region spans residues 1673 to 1676 (KKGM). 1682 to 1689 (FHPGAGKT) contributes to the ATP binding site. Residues 1773-1776 (DEAH) carry the DEAH box motif. One can recognise a Helicase C-terminal domain in the interval 1820–1997 (EIEDVQTDIP…VRGGMVAPLY (178 aa)). An N6-acetyllysine; by host modification is found at lysine 1877. The tract at residues 1942–1961 (AAQRRGRIGRNPNRDGDSYY) is disordered. A helical membrane pass occupies residues 2158–2178 (MTIAMLFILAGLLTSGMVIFF). The Lumenal portion of the chain corresponds to 2179–2186 (MSPKGISR). Residues 2187-2207 (MSMAMGTMAGCGYLMFLGGVK) constitute an intramembrane region (helical). Over 2208–2209 (PT) the chain is Lumenal. Residues 2210–2230 (HISYIMLIFFVLMVVVIPEPG) traverse the membrane as a helical segment. Topologically, residues 2231-2241 (QQRSIQDNQVA) are cytoplasmic. The helical transmembrane segment at 2242–2262 (YLIIGILTLVSVVAANELGML) threads the bilayer. Over 2263 to 2293 (EKTKEDLFGKKDLIPSSASPWSWPDLDLKPG) the chain is Lumenal. An intramembrane region (helical) is located at residues 2294 to 2314 (AAWTVYVGIVTMLSPMLHHWI). The Lumenal portion of the chain corresponds to 2315 to 2360 (KVEYGNLSLSGIAQSASVLSFMDKGIPFMKMNISVIILLVSGWNSI). Residues 2361 to 2380 (TVMPLLCGIGCAMLHWSLIL) traverse the membrane as a helical segment. Over 2381 to 2421 (PGIKAQQSKLAQRRVFHGVAKNPVVDGNPTVDIEEAPEMPA) the chain is Cytoplasmic. Residues 2422-2442 (LYEKKLALYLLLALSLASVAM) form a helical membrane-spanning segment. The Lumenal segment spans residues 2443 to 2445 (CRT). Residues 2446 to 2466 (PFSLAEGIVLASAALGPLIEG) form a helical membrane-spanning segment. Over 2467–3411 (NTSLLWNGPM…DADLQPGELI (945 aa)) the chain is Cytoplasmic. The region spanning 2507–2771 (GRANGKTLGE…DVILPIGTRS (265 aa)) is the mRNA cap 0-1 NS5-type MT domain. Serine 2562 is a binding site for S-adenosyl-L-methionine. Serine 2562 carries the phosphoserine modification. The active-site For 2'-O-MTase activity is the lysine 2567. S-adenosyl-L-methionine is bound by residues glycine 2592, tryptophan 2593, threonine 2610, leucine 2611, aspartate 2637, and isoleucine 2638. Residue aspartate 2652 is the For 2'-O-MTase activity of the active site. Isoleucine 2653 is a binding site for S-adenosyl-L-methionine. Catalysis depends on for 2'-O-MTase activity residues lysine 2688 and glutamate 2724. Residue tyrosine 2726 participates in S-adenosyl-L-methionine binding. The Nuclear localization signal motif lies at 2878-2911 (RKIMKVVNRWLFRHLAREKNPRLCTKEEFIAKVR). The Zn(2+) site is built by glutamate 2945, histidine 2949, cysteine 2954, and cysteine 2957. A RdRp catalytic domain is found at 3035–3187 (GGFYADDTAG…RPIDDRFGLA (153 aa)). Positions 3222, 3238, and 3357 each coordinate Zn(2+).

This sequence in the N-terminal section; belongs to the class I-like SAM-binding methyltransferase superfamily. mRNA cap 0-1 NS5-type methyltransferase family. Homodimer. Interacts (via N-terminus) with host EXOC1 (via C-terminus); this interaction results in EXOC1 degradation through the proteasome degradation pathway. In terms of assembly, forms heterodimers with envelope protein E in the endoplasmic reticulum and Golgi. As to quaternary structure, homodimer; in the endoplasmic reticulum and Golgi. Interacts with protein prM. Interacts with non-structural protein 1. Homodimer; Homohexamer when secreted. Interacts with envelope protein E. In terms of assembly, interacts (via N-terminus) with serine protease NS3. As to quaternary structure, forms a heterodimer with serine protease NS3. May form homooligomers. Forms a heterodimer with NS2B. Interacts with non-structural protein 2A (via N-terminus). Interacts with NS4B. Interacts with unphosphorylated RNA-directed RNA polymerase NS5; this interaction stimulates RNA-directed RNA polymerase NS5 guanylyltransferase activity. NS3 interacts with host PDCD6IP; this interaction contributes to virion release. In terms of assembly, interacts with serine protease NS3. As to quaternary structure, homodimer. Interacts with host STAT2; this interaction prevents the establishment of cellular antiviral state. Interacts with serine protease NS3. Interacts with host TRIM23; this interaction leads to NS5 ubiquitination. Specific enzymatic cleavages in vivo yield mature proteins. The nascent capsid protein C contains a C-terminal hydrophobic domain that act as a signal sequence for translocation of prM into the lumen of the ER. Mature capsid protein C is cleaved at a site upstream of this hydrophobic domain by NS3. prM is cleaved in post-Golgi vesicles by a host furin, releasing the mature small envelope protein M, and peptide pr. Non-structural protein 2A-alpha, a C-terminally truncated form of non-structural protein 2A, results from partial cleavage by NS3. Specific enzymatic cleavages in vivo yield mature proteins peptide 2K acts as a signal sequence and is removed from the N-terminus of NS4B by the host signal peptidase in the ER lumen. Signal cleavage at the 2K-4B site requires a prior NS3 protease-mediated cleavage at the 4A-2K site. In terms of processing, cleaved in post-Golgi vesicles by a host furin, releasing the mature small envelope protein M, and peptide pr. This cleavage is incomplete as up to 30% of viral particles still carry uncleaved prM. Post-translationally, N-glycosylated. N-glycosylated. The excreted form is glycosylated and this is required for efficient secretion of the protein from infected cells. In terms of processing, polyubiquitinated; ubiquitination is probably mediated by host TRIM23 and is prerequisite for NS5-STAT2 interaction. NS5 is not ISGylated or sumoylated. Post-translationally, acetylated by host KAT5. Acetylation modulates NS3 RNA-binding and unwinding activities and plays an important positive role for viral replication. Phosphorylated on serines residues. This phosphorylation may trigger NS5 nuclear localization.

The protein resides in the virion. It localises to the host nucleus. The protein localises to the host cytoplasm. It is found in the host perinuclear region. Its subcellular location is the secreted. The protein resides in the virion membrane. It localises to the host endoplasmic reticulum membrane. The catalysed reaction is Selective hydrolysis of -Xaa-Xaa-|-Yaa- bonds in which each of the Xaa can be either Arg or Lys and Yaa can be either Ser or Ala.. It catalyses the reaction RNA(n) + a ribonucleoside 5'-triphosphate = RNA(n+1) + diphosphate. The enzyme catalyses a ribonucleoside 5'-triphosphate + H2O = a ribonucleoside 5'-diphosphate + phosphate + H(+). It carries out the reaction ATP + H2O = ADP + phosphate + H(+). The catalysed reaction is a 5'-end (5'-triphosphoguanosine)-ribonucleoside in mRNA + S-adenosyl-L-methionine = a 5'-end (N(7)-methyl 5'-triphosphoguanosine)-ribonucleoside in mRNA + S-adenosyl-L-homocysteine. It catalyses the reaction a 5'-end (N(7)-methyl 5'-triphosphoguanosine)-ribonucleoside in mRNA + S-adenosyl-L-methionine = a 5'-end (N(7)-methyl 5'-triphosphoguanosine)-(2'-O-methyl-ribonucleoside) in mRNA + S-adenosyl-L-homocysteine + H(+). In terms of biological role, plays a role in virus budding by binding to the cell membrane and gathering the viral RNA into a nucleocapsid that forms the core of a mature virus particle. During virus entry, may induce genome penetration into the host cytoplasm after hemifusion induced by the surface proteins. Can migrate to the cell nucleus where it modulates host functions. Inhibits RNA silencing by interfering with host Dicer. Functionally, prevents premature fusion activity of envelope proteins in trans-Golgi by binding to envelope protein E at pH6.0. After virion release in extracellular space, gets dissociated from E dimers. Its function is as follows. Acts as a chaperone for envelope protein E during intracellular virion assembly by masking and inactivating envelope protein E fusion peptide. prM is the only viral peptide matured by host furin in the trans-Golgi network probably to avoid catastrophic activation of the viral fusion activity in acidic Golgi compartment prior to virion release. prM-E cleavage is inefficient, and many virions are only partially matured. These uncleaved prM would play a role in immune evasion. In terms of biological role, may play a role in virus budding. Exerts cytotoxic effects by activating a mitochondrial apoptotic pathway through M ectodomain. May display a viroporin activity. Binds to host cell surface receptor and mediates fusion between viral and cellular membranes. Envelope protein is synthesized in the endoplasmic reticulum in the form of heterodimer with protein prM. They play a role in virion budding in the ER, and the newly formed immature particle is covered with 60 spikes composed of heterodimer between precursor prM and envelope protein E. The virion is transported to the Golgi apparatus where the low pH causes dissociation of PrM-E heterodimers and formation of E homodimers. prM-E cleavage is inefficient, and many virions are only partially matured. These uncleaved prM would play a role in immune evasion. Functionally, involved in immune evasion, pathogenesis and viral replication. Once cleaved off the polyprotein, is targeted to three destinations: the viral replication cycle, the plasma membrane and the extracellular compartment. Essential for viral replication. Required for formation of the replication complex and recruitment of other non-structural proteins to the ER-derived membrane structures. Excreted as a hexameric lipoparticle that plays a role against host immune response. Antagonizing the complement function. Binds to the host macrophages and dendritic cells. Inhibits signal transduction originating from Toll-like receptor 3 (TLR3). Its function is as follows. Component of the viral RNA replication complex that functions in virion assembly and antagonizes the host immune response. In terms of biological role, required cofactor for the serine protease function of NS3. May have membrane-destabilizing activity and form viroporins. Displays three enzymatic activities: serine protease, NTPase and RNA helicase. NS3 serine protease, in association with NS2B, performs its autocleavage and cleaves the polyprotein at dibasic sites in the cytoplasm: C-prM, NS2A-NS2B, NS2B-NS3, NS3-NS4A, NS4A-2K and NS4B-NS5. NS3 RNA helicase binds RNA and unwinds dsRNA in the 3' to 5' direction. Also plays a role in virus assembly. Functionally, regulates the ATPase activity of the NS3 helicase activity. NS4A allows NS3 helicase to conserve energy during unwinding. Its function is as follows. Functions as a signal peptide for NS4B and is required for the interferon antagonism activity of the latter. In terms of biological role, induces the formation of ER-derived membrane vesicles where the viral replication takes place. Inhibits interferon (IFN)-induced host STAT1 phosphorylation and nuclear translocation, thereby preventing the establishment of cellular antiviral state by blocking the IFN-alpha/beta pathway. Replicates the viral (+) and (-) RNA genome, and performs the capping of genomes in the cytoplasm. NS5 methylates viral RNA cap at guanine N-7 and ribose 2'-O positions. Besides its role in RNA genome replication, also prevents the establishment of cellular antiviral state by blocking the interferon-alpha/beta (IFN-alpha/beta) signaling pathway. IFN-I induces binding of NS5 to host IFN-activated transcription factor STAT2, preventing its transcriptional activity. Host TRIM23 is the E3 ligase that interacts with and polyubiquitinates NS5 to promote its binding to STAT2 and trigger IFN-I signaling inhibition. The sequence is that of Genome polyprotein from Yellow fever virus (isolate Ivory Coast/1999) (YFV).